We begin with the raw amino-acid sequence, 414 residues long: 25-hydroxycholesterol 7-alpha-hydroxylase (414 aa).

C354 lines the heme pocket.

The protein belongs to the cytochrome P450 family. Heme serves as cofactor. As to expression, highly expressed in brain; also expressed in liver and kidney.

It localises to the endoplasmic reticulum membrane. The protein localises to the microsome membrane. The enzyme catalyses 25-hydroxycholesterol + reduced [NADPH--hemoprotein reductase] + O2 = 7alpha,25-dihydroxycholesterol + oxidized [NADPH--hemoprotein reductase] + H2O + H(+). It catalyses the reaction (25R)-cholest-5-ene-3beta,26-diol + reduced [NADPH--hemoprotein reductase] + O2 = (25R)-cholest-5-en-3beta,7alpha,26-triol + oxidized [NADPH--hemoprotein reductase] + H2O + H(+). The protein operates within lipid metabolism; bile acid biosynthesis. Its function is as follows. Oxysterol 7alpha-hydroxylase that mediates formation of 7-alpha,25-dihydroxycholesterol (7-alpha,25-OHC) from 25-hydroxycholesterol. Plays a key role in cell positioning and movement in lymphoid tissues: 7-alpha,25-dihydroxycholesterol (7-alpha,25-OHC) acts as a ligand for the G protein-coupled receptor GPR183/EBI2, a chemotactic receptor for a number of lymphoid cells. This Rattus norvegicus (Rat) protein is 25-hydroxycholesterol 7-alpha-hydroxylase (Cyp7b1).